The primary structure comprises 349 residues: Hydroxymethylglutaryl-CoA synthase (349 aa).

(3S)-3-hydroxy-3-methylglutaryl-CoA contacts are provided by Asp-29 and Ala-30. The Proton donor/acceptor role is filled by Glu-81. 2 residues coordinate (3S)-3-hydroxy-3-methylglutaryl-CoA: Cys-113 and Thr-154. The Acyl-thioester intermediate role is filled by Cys-113. Residue Arg-202 coordinates CoA. Residues Thr-204 and His-237 each coordinate (3S)-3-hydroxy-3-methylglutaryl-CoA. The active-site Proton donor/acceptor is His-237. Lys-242 is a CoA binding site. Lys-246, Asn-269, and Ser-299 together coordinate (3S)-3-hydroxy-3-methylglutaryl-CoA.

The protein belongs to the thiolase-like superfamily. Archaeal HMG-CoA synthase family. Interacts with acetoacetyl-CoA thiolase that catalyzes the precedent step in the pathway and with a DUF35 protein. The acetoacetyl-CoA thiolase/HMG-CoA synthase complex channels the intermediate via a fused CoA-binding site, which allows for efficient coupling of the endergonic thiolase reaction with the exergonic HMGCS reaction.

It carries out the reaction acetoacetyl-CoA + acetyl-CoA + H2O = (3S)-3-hydroxy-3-methylglutaryl-CoA + CoA + H(+). The protein operates within metabolic intermediate biosynthesis; (R)-mevalonate biosynthesis; (R)-mevalonate from acetyl-CoA: step 2/3. Functionally, catalyzes the condensation of acetyl-CoA with acetoacetyl-CoA to form 3-hydroxy-3-methylglutaryl-CoA (HMG-CoA). Functions in the mevalonate (MVA) pathway leading to isopentenyl diphosphate (IPP), a key precursor for the biosynthesis of isoprenoid compounds that are building blocks of archaeal membrane lipids. The chain is Hydroxymethylglutaryl-CoA synthase from Methanosarcina mazei (strain ATCC BAA-159 / DSM 3647 / Goe1 / Go1 / JCM 11833 / OCM 88) (Methanosarcina frisia).